The sequence spans 492 residues: Protein PAIR1 (492 aa).

Residues 166 to 186 (VDSVQSDVMQLNRAMKEASLD) are a coiled coil. A Nuclear localization signal motif is present at residues 479–483 (KRRRR).

As to quaternary structure, interacts with CRC1. Expressed in reproductive organs, but not in vegetative organs.

Its subcellular location is the nucleus. Its function is as follows. Involved in spore formation. Plays an essential role in the establishment of homologous chromosome pairing in early meiosis. In Oryza sativa subsp. japonica (Rice), this protein is Protein PAIR1 (PAIR1).